The sequence spans 152 residues: Transcriptional regulator MraZ (152 aa).

SpoVT-AbrB domains are found at residues 5 to 52 and 81 to 124; these read AQAI…PLKE and ATEC…SETE.

This sequence belongs to the MraZ family. In terms of assembly, forms oligomers.

Its subcellular location is the cytoplasm. It is found in the nucleoid. This Mannheimia succiniciproducens (strain KCTC 0769BP / MBEL55E) protein is Transcriptional regulator MraZ.